A 268-amino-acid chain; its full sequence is Leucyl/phenylalanyl-tRNA--protein transferase (268 aa).

Belongs to the L/F-transferase family.

The protein resides in the cytoplasm. It carries out the reaction N-terminal L-lysyl-[protein] + L-leucyl-tRNA(Leu) = N-terminal L-leucyl-L-lysyl-[protein] + tRNA(Leu) + H(+). It catalyses the reaction N-terminal L-arginyl-[protein] + L-leucyl-tRNA(Leu) = N-terminal L-leucyl-L-arginyl-[protein] + tRNA(Leu) + H(+). The enzyme catalyses L-phenylalanyl-tRNA(Phe) + an N-terminal L-alpha-aminoacyl-[protein] = an N-terminal L-phenylalanyl-L-alpha-aminoacyl-[protein] + tRNA(Phe). In terms of biological role, functions in the N-end rule pathway of protein degradation where it conjugates Leu, Phe and, less efficiently, Met from aminoacyl-tRNAs to the N-termini of proteins containing an N-terminal arginine or lysine. This chain is Leucyl/phenylalanyl-tRNA--protein transferase, found in Zymomonas mobilis subsp. mobilis (strain ATCC 31821 / ZM4 / CP4).